A 510-amino-acid polypeptide reads, in one-letter code: Inositol-3-phosphate synthase (510 aa).

Gly-70, Gly-71, Asn-72, Asn-73, Asp-143, Ile-180, Gln-190, Arg-193, Thr-230, Ala-231, Asn-232, Thr-233, Gly-281, Ser-282, Asp-306, Ser-309, Asn-340, Asn-341, Asp-342, Lys-355, Gly-393, Asp-394, Asp-422, and Ser-423 together coordinate NAD(+).

It belongs to the myo-inositol 1-phosphate synthase family. The cofactor is NAD(+).

The protein localises to the cytoplasm. It is found in the cytosol. It localises to the nucleus. The catalysed reaction is D-glucose 6-phosphate = 1D-myo-inositol 3-phosphate. It functions in the pathway polyol metabolism; myo-inositol biosynthesis; myo-inositol from D-glucose 6-phosphate: step 1/2. Key enzyme in myo-inositol biosynthesis pathway that catalyzes the conversion of glucose 6-phosphate to 1-myo-inositol 1-phosphate in a NAD-dependent manner. This chain is Inositol-3-phosphate synthase (INPS1), found in Nicotiana paniculata.